Consider the following 95-residue polypeptide: Large ribosomal subunit protein uL23 (95 aa).

The protein belongs to the universal ribosomal protein uL23 family. Part of the 50S ribosomal subunit. Contacts protein L29, and trigger factor when it is bound to the ribosome.

Functionally, one of the early assembly proteins it binds 23S rRNA. One of the proteins that surrounds the polypeptide exit tunnel on the outside of the ribosome. Forms the main docking site for trigger factor binding to the ribosome. This is Large ribosomal subunit protein uL23 from Desulfitobacterium hafniense (strain Y51).